The primary structure comprises 431 residues: Serine hydroxymethyltransferase (431 aa).

Residues leucine 128 and 132 to 134 contribute to the (6S)-5,6,7,8-tetrahydrofolate site; that span reads GHL. Lysine 237 bears the N6-(pyridoxal phosphate)lysine mark.

It belongs to the SHMT family. In terms of assembly, homodimer. Requires pyridoxal 5'-phosphate as cofactor.

The protein localises to the cytoplasm. It catalyses the reaction (6R)-5,10-methylene-5,6,7,8-tetrahydrofolate + glycine + H2O = (6S)-5,6,7,8-tetrahydrofolate + L-serine. It functions in the pathway one-carbon metabolism; tetrahydrofolate interconversion. Its pathway is amino-acid biosynthesis; glycine biosynthesis; glycine from L-serine: step 1/1. Catalyzes the reversible interconversion of serine and glycine with tetrahydrofolate (THF) serving as the one-carbon carrier. This reaction serves as the major source of one-carbon groups required for the biosynthesis of purines, thymidylate, methionine, and other important biomolecules. Also exhibits THF-independent aldolase activity toward beta-hydroxyamino acids, producing glycine and aldehydes, via a retro-aldol mechanism. The chain is Serine hydroxymethyltransferase from Ruegeria sp. (strain TM1040) (Silicibacter sp.).